Here is a 228-residue protein sequence, read N- to C-terminus: MTIANWPACERPREKLMESGAAALSDAELLAILLRVGAAGKSAVDLARELLHRFGSLTALFAAEGRALTSVRGMGETKYAQLQAIPELARRALAESLRLPTGFDGPAAVRNYLRLTLAPLPHEVFLCLFLDPRNRMVASEEMFRGTLTRTAVYPREVARQALVHNAAGIIVAHNHPRGTTAPSQSDIRLTHELARTLDLIDVRLLDHFIVAGQEIRSLADCCDRLPGL.

Residues G102–R224 form the MPN domain. Positions 173, 175, and 186 each coordinate Zn(2+). The short motif at H173–D186 is the JAMM motif element.

This sequence belongs to the UPF0758 family.

The polypeptide is UPF0758 protein H16_A3033 (Cupriavidus necator (strain ATCC 17699 / DSM 428 / KCTC 22496 / NCIMB 10442 / H16 / Stanier 337) (Ralstonia eutropha)).